Reading from the N-terminus, the 215-residue chain is Small ribosomal subunit protein uS7 (215 aa).

Belongs to the universal ribosomal protein uS7 family. As to quaternary structure, part of the 30S ribosomal subunit.

Its function is as follows. One of the primary rRNA binding proteins, it binds directly to 16S rRNA where it nucleates assembly of the head domain of the 30S subunit. Is located at the subunit interface close to the decoding center. The polypeptide is Small ribosomal subunit protein uS7 (Pyrococcus furiosus (strain ATCC 43587 / DSM 3638 / JCM 8422 / Vc1)).